The primary structure comprises 470 residues: UDP-glycosyltransferase 91A1 (470 aa).

UDP-alpha-D-glucose is bound by residues Ser290, 350 to 352 (VEQ), 367 to 375 (HPGWGTIIE), and 389 to 392 (VYDQ).

This sequence belongs to the UDP-glycosyltransferase family.

The protein is UDP-glycosyltransferase 91A1 (UGT91A1) of Arabidopsis thaliana (Mouse-ear cress).